A 100-amino-acid polypeptide reads, in one-letter code: NADH-quinone oxidoreductase subunit K (100 aa).

3 helical membrane passes run 4-24 (LQHG…GLII), 28-48 (LLFM…AFVV), and 60-80 (VMYI…LALL).

Belongs to the complex I subunit 4L family. NDH-1 is composed of 13 different subunits. Subunits NuoA, H, J, K, L, M, N constitute the membrane sector of the complex.

Its subcellular location is the cell inner membrane. The enzyme catalyses a quinone + NADH + 5 H(+)(in) = a quinol + NAD(+) + 4 H(+)(out). Its function is as follows. NDH-1 shuttles electrons from NADH, via FMN and iron-sulfur (Fe-S) centers, to quinones in the respiratory chain. The immediate electron acceptor for the enzyme in this species is believed to be ubiquinone. Couples the redox reaction to proton translocation (for every two electrons transferred, four hydrogen ions are translocated across the cytoplasmic membrane), and thus conserves the redox energy in a proton gradient. This Yersinia enterocolitica serotype O:8 / biotype 1B (strain NCTC 13174 / 8081) protein is NADH-quinone oxidoreductase subunit K.